A 49-amino-acid polypeptide reads, in one-letter code: Large ribosomal subunit protein bL33B (49 aa).

Belongs to the bacterial ribosomal protein bL33 family.

In Geobacillus thermodenitrificans (strain NG80-2), this protein is Large ribosomal subunit protein bL33B.